The chain runs to 107 residues: Iron-binding protein IscA (107 aa).

The Fe cation site is built by C35, C99, and C101.

This sequence belongs to the HesB/IscA family. Homodimer; may form tetramers and higher multimers. Requires Fe cation as cofactor.

Functionally, is able to transfer iron-sulfur clusters to apo-ferredoxin. Multiple cycles of [2Fe2S] cluster formation and transfer are observed, suggesting that IscA acts catalytically. Recruits intracellular free iron so as to provide iron for the assembly of transient iron-sulfur cluster in IscU in the presence of IscS, L-cysteine and the thioredoxin reductase system TrxA/TrxB. This Yersinia pestis bv. Antiqua (strain Angola) protein is Iron-binding protein IscA.